The sequence spans 334 residues: Probable aminoacyl tRNA synthase complex-interacting multifunctional protein 2 (334 aa).

The GST C-terminal domain occupies 280-327 (LDKRLQKQQYFGGSQMSVADVGVYSSLIRMPAVTEKDLTPALVAWRKR).

Component of the aminoacyl-tRNA synthase complex which is comprised of a bifunctional glutamyl-prolyl-tRNA synthase, the monospecific isoleucyl, leucyl, glutaminyl, methionyl, lysyl, arginyl and aspartyl-tRNA synthases, and three auxiliary proteins.

It is found in the cytoplasm. The protein localises to the cytosol. The protein resides in the nucleus. Its function is as follows. Required for assembly and stability of the aminoacyl-tRNA synthase complex. In Drosophila melanogaster (Fruit fly), this protein is Probable aminoacyl tRNA synthase complex-interacting multifunctional protein 2.